A 335-amino-acid chain; its full sequence is Carboxylesterase 1 (335 aa).

Positions 90–92 (HGG) match the Involved in the stabilization of the negatively charged intermediate by the formation of the oxyanion hole motif. Residues 92–93 (GG), Ser-169, and Ala-170 contribute to the paraoxon site. Residue Ser-169 is part of the active site. Catalysis depends on residues Asp-276 and His-306.

The protein belongs to the 'GDXG' lipolytic enzyme family.

The catalysed reaction is a carboxylic ester + H2O = an alcohol + a carboxylate + H(+). With respect to regulation, is inhibited by the organophosphates paraoxon and dimethylchlorophosphate (DMCP). Functionally, carboxylesterase acting on esters with varying acyl chain length. The polypeptide is Carboxylesterase 1 (CXE1) (Actinidia eriantha (Velvet vine)).